An 89-amino-acid chain; its full sequence is Small ribosomal subunit protein uS14A (89 aa).

It belongs to the universal ribosomal protein uS14 family. Part of the 30S ribosomal subunit. Contacts proteins S3 and S10.

In terms of biological role, binds 16S rRNA, required for the assembly of 30S particles and may also be responsible for determining the conformation of the 16S rRNA at the A site. The chain is Small ribosomal subunit protein uS14A from Streptococcus equi subsp. zooepidemicus (strain MGCS10565).